The primary structure comprises 196 residues: Proteasome subunit beta (196 aa).

Methionine 1 is a propeptide (removed in mature form; by autocatalysis). Catalysis depends on threonine 2, which acts as the Nucleophile.

Belongs to the peptidase T1B family. As to quaternary structure, the 20S proteasome core is composed of 14 alpha and 14 beta subunits that assemble into four stacked heptameric rings, resulting in a barrel-shaped structure. The two inner rings, each composed of seven catalytic beta subunits, are sandwiched by two outer rings, each composed of seven alpha subunits. The catalytic chamber with the active sites is on the inside of the barrel. Has a gated structure, the ends of the cylinder being occluded by the N-termini of the alpha-subunits. Is capped at one or both ends by the proteasome regulatory ATPase, PAN.

It is found in the cytoplasm. It catalyses the reaction Cleavage of peptide bonds with very broad specificity.. With respect to regulation, the formation of the proteasomal ATPase PAN-20S proteasome complex, via the docking of the C-termini of PAN into the intersubunit pockets in the alpha-rings, triggers opening of the gate for substrate entry. Interconversion between the open-gate and close-gate conformations leads to a dynamic regulation of the 20S proteasome proteolysis activity. Component of the proteasome core, a large protease complex with broad specificity involved in protein degradation. The polypeptide is Proteasome subunit beta (Nanoarchaeum equitans (strain Kin4-M)).